A 635-amino-acid chain; its full sequence is Cilia- and flagella-associated protein 206 (635 aa).

The protein belongs to the CFAP206 family.

Its subcellular location is the cytoplasm. It is found in the cytoskeleton. The protein localises to the cilium axoneme. Functionally, may regulate cilium motility through its role in the assembly of the axonemal RS2 radial spoke. In Tetrahymena thermophila (strain SB210), this protein is Cilia- and flagella-associated protein 206.